The chain runs to 375 residues: Probable cytochrome c oxidase subunit 2 (375 aa).

Transmembrane regions (helical) follow at residues 36 to 56 (LAVS…DNVW), 80 to 100 (IIAA…TVVF), and 122 to 142 (LTYT…TVVV). His-264, Cys-305, Cys-309, and His-313 together coordinate Cu cation. Residues 353–363 (VATSTRPFNTD) are compositionally biased toward polar residues. The disordered stretch occupies residues 353–375 (VATSTRPFNTDRTVKSAAAPEAE).

It belongs to the cytochrome c oxidase subunit 2 family. Cu cation serves as cofactor. The cofactor is heme.

It is found in the cell membrane. It catalyses the reaction 4 Fe(II)-[cytochrome c] + O2 + 8 H(+)(in) = 4 Fe(III)-[cytochrome c] + 2 H2O + 4 H(+)(out). Its function is as follows. Subunits I and II form the functional core of the enzyme complex. Electrons originating in cytochrome c are transferred via heme a and Cu(A) to the binuclear center formed by heme a3 and Cu(B). In Nocardia farcinica (strain IFM 10152), this protein is Probable cytochrome c oxidase subunit 2 (ctaC).